Consider the following 370-residue polypeptide: Putrescine-binding periplasmic protein PotF (370 aa).

The signal sequence occupies residues 1–26; it reads MTALNKKWLSGLVAGALMAVSVGTLA. A putrescine-binding site is contributed by Ser38. A disulfide bridge links Cys175 with Cys239. Positions 247 and 278 each coordinate putrescine.

It belongs to the bacterial solute-binding protein PotD/PotF family. As to quaternary structure, the complex is composed of two ATP-binding proteins (PotG), two transmembrane proteins (PotH and PotI) and a solute-binding protein (PotF).

Its subcellular location is the periplasm. Transport is feedback inhibited by intracellular polyamines. In terms of biological role, part of the ABC transporter complex PotFGHI involved in putrescine uptake. Binds putrescine. Imports putrescine for maintenance of the optimal concentration of polyamines necessary for cell growth in the presence of glucose. In Escherichia coli (strain K12), this protein is Putrescine-binding periplasmic protein PotF.